We begin with the raw amino-acid sequence, 308 residues long: MSITGIDSSHVTESQGTLLFNEPLAEYTTWRVGGPAARLYKPANIDDLALFLSRLPFDEPLLWLGLGSNSLIRDGGFSGTVILTQGCLKEMTLLSDNCIRVEAGVSCASMARFSARNNLSGGEFWAGIPGTMGGALRMNAGCHGGETWQSVIEVQTINRRGEIRTRKPEEFEVAYRHVAGLGDEWFISAKLQLSPGNKETSLQLIKDLLAHRAKTQPTNEYNCGSVFRNPPGDFAARLIESCGLKGVSIGGAVVSEKHANFIINHQGTATAANIEALIHLVQTKVREQTSIELIREVHIIGDANVQTR.

The FAD-binding PCMH-type domain maps to 32–196; the sequence is VGGPAARLYK…ISAKLQLSPG (165 aa). Arginine 176 is an active-site residue. Serine 225 acts as the Proton donor in catalysis. Glutamate 296 is a catalytic residue.

The protein belongs to the MurB family. FAD serves as cofactor.

It localises to the cytoplasm. It catalyses the reaction UDP-N-acetyl-alpha-D-muramate + NADP(+) = UDP-N-acetyl-3-O-(1-carboxyvinyl)-alpha-D-glucosamine + NADPH + H(+). It functions in the pathway cell wall biogenesis; peptidoglycan biosynthesis. Cell wall formation. The sequence is that of UDP-N-acetylenolpyruvoylglucosamine reductase from Legionella pneumophila (strain Lens).